We begin with the raw amino-acid sequence, 220 residues long: Transcriptional regulatory protein SpaR (220 aa).

The region spanning 3 to 115 (KILAVDDEKD…ELSARVNAHL (113 aa)) is the Response regulatory domain. 4-aspartylphosphate is present on Asp51. A DNA-binding region (ompR/PhoB-type) is located at residues 124 to 220 (QSKRVISGFL…TVWGVGYKWE (97 aa)).

In terms of processing, phosphorylated by SpaK.

The protein resides in the cytoplasm. Functionally, member of the two-component regulatory system SpaK/SpaR involved in the regulation of the biosynthesis of lantibiotic subtilin. SpaR may function as a regulatory protein. The protein is Transcriptional regulatory protein SpaR (spaR) of Bacillus subtilis.